We begin with the raw amino-acid sequence, 187 residues long: GTP cyclohydrolase 1 (187 aa).

Residues C76, H79, and C148 each contribute to the Zn(2+) site.

This sequence belongs to the GTP cyclohydrolase I family. Homomer.

It catalyses the reaction GTP + H2O = 7,8-dihydroneopterin 3'-triphosphate + formate + H(+). It participates in cofactor biosynthesis; 7,8-dihydroneopterin triphosphate biosynthesis; 7,8-dihydroneopterin triphosphate from GTP: step 1/1. This Desulforamulus reducens (strain ATCC BAA-1160 / DSM 100696 / MI-1) (Desulfotomaculum reducens) protein is GTP cyclohydrolase 1.